A 101-amino-acid polypeptide reads, in one-letter code: MGTRFLLALCLVLLVLGFEVQGAQLSQQDEPPSPALLTQVQESLSSYWESAKAAAQKLYQKTYLPAVDEKLRDLYSKSTAAMSTYTGIFTDQVLSVLKGEE.

Positions 1–22 (MGTRFLLALCLVLLVLGFEVQG) are cleaved as a signal peptide. Residues 66-74 (AVDEKLRDL) form a lipid binding region. The tract at residues 78–101 (STAAMSTYTGIFTDQVLSVLKGEE) is lipoprotein lipase cofactor.

Belongs to the apolipoprotein C2 family. Post-translationally, proapolipoprotein C-II is synthesized as a sialic acid containing glycoprotein which is subsequently desialylated prior to its proteolytic processing. Proapolipoprotein C-II, the major form found in plasma undergoes proteolytic cleavage of its N-terminal hexapeptide to generate apolipoprotein C-II, which occurs as the minor form in plasma.

It localises to the secreted. Functionally, component of chylomicrons, very low-density lipoproteins (VLDL), low-density lipoproteins (LDL), and high-density lipoproteins (HDL) in plasma. Plays an important role in lipoprotein metabolism as an activator of lipoprotein lipase. Both proapolipoprotein C-II and apolipoprotein C-II can activate lipoprotein lipase. In Colobus guereza (Mantled guereza), this protein is Apolipoprotein C-II (APOC2).